The following is a 276-amino-acid chain: Acyl-[acyl-carrier-protein]--UDP-N-acetylglucosamine O-acyltransferase (276 aa).

This sequence belongs to the transferase hexapeptide repeat family. LpxA subfamily. As to quaternary structure, homotrimer.

The protein localises to the cytoplasm. It carries out the reaction a (3R)-hydroxyacyl-[ACP] + UDP-N-acetyl-alpha-D-glucosamine = a UDP-3-O-[(3R)-3-hydroxyacyl]-N-acetyl-alpha-D-glucosamine + holo-[ACP]. It participates in glycolipid biosynthesis; lipid IV(A) biosynthesis; lipid IV(A) from (3R)-3-hydroxytetradecanoyl-[acyl-carrier-protein] and UDP-N-acetyl-alpha-D-glucosamine: step 1/6. Functionally, involved in the biosynthesis of lipid A, a phosphorylated glycolipid that anchors the lipopolysaccharide to the outer membrane of the cell. In Gloeothece citriformis (strain PCC 7424) (Cyanothece sp. (strain PCC 7424)), this protein is Acyl-[acyl-carrier-protein]--UDP-N-acetylglucosamine O-acyltransferase.